A 56-amino-acid polypeptide reads, in one-letter code: Male determiner protein Yob (56 aa).

Male determiner protein (M-factor) that controls male somatic sexual differentiation. Acts as a dominant factor that regulates the mRNA splicing of doublesex (dsx) transcripts and promotes expression of male splice forms of dsx. The sequence is that of Male determiner protein Yob from Anopheles gambiae (African malaria mosquito).